Reading from the N-terminus, the 47-residue chain is KSCCRNTWARNCYNVCRLPGTISREICAKKCDCKIISGTTCPSDYPK.

Disulfide bonds link cysteine 3-cysteine 41, cysteine 4-cysteine 33, cysteine 12-cysteine 31, and cysteine 16-cysteine 27.

The protein belongs to the plant thionin (TC 1.C.44) family. 4 C-C subfamily.

It is found in the secreted. In terms of biological role, thionins are small plant proteins which are toxic to animal cells. They seem to exert their toxic effect at the level of the cell membrane. Their precise function is not known. The chain is Thionin (THI1) from Pyrularia pubera (Buffalo nut).